The primary structure comprises 263 residues: Small ribosomal subunit protein eS4, Y isoform 1 (263 aa).

The S4 RNA-binding domain maps to 42 to 104; it reads LPLIVFLRNR…TGEHFRLVYD (63 aa).

The protein belongs to the eukaryotic ribosomal protein eS4 family.

In Homo sapiens (Human), this protein is Small ribosomal subunit protein eS4, Y isoform 1 (RPS4Y1).